The sequence spans 216 residues: Probable transaldolase (216 aa).

The Schiff-base intermediate with substrate role is filled by K83.

This sequence belongs to the transaldolase family. Type 3B subfamily.

It localises to the cytoplasm. It catalyses the reaction D-sedoheptulose 7-phosphate + D-glyceraldehyde 3-phosphate = D-erythrose 4-phosphate + beta-D-fructose 6-phosphate. It participates in carbohydrate degradation; pentose phosphate pathway; D-glyceraldehyde 3-phosphate and beta-D-fructose 6-phosphate from D-ribose 5-phosphate and D-xylulose 5-phosphate (non-oxidative stage): step 2/3. Transaldolase is important for the balance of metabolites in the pentose-phosphate pathway. This Sphingopyxis alaskensis (strain DSM 13593 / LMG 18877 / RB2256) (Sphingomonas alaskensis) protein is Probable transaldolase.